Here is a 237-residue protein sequence, read N- to C-terminus: Ribitol-5-phosphate cytidylyltransferase (237 aa).

CTP is bound by residues 7–10 (LAGG), 81–87 (GSDRNES), and S112.

This sequence belongs to the IspD/TarI cytidylyltransferase family. TarI subfamily.

The enzyme catalyses D-ribitol 5-phosphate + CTP + H(+) = CDP-L-ribitol + diphosphate. The protein operates within cell wall biogenesis; poly(ribitol phosphate) teichoic acid biosynthesis. Functionally, catalyzes the transfer of the cytidylyl group of CTP to D-ribitol 5-phosphate. The polypeptide is Ribitol-5-phosphate cytidylyltransferase (Bacillus spizizenii (strain ATCC 23059 / NRRL B-14472 / W23) (Bacillus subtilis subsp. spizizenii)).